The chain runs to 194 residues: Peptidyl-tRNA hydrolase (194 aa).

Tyrosine 17 contacts tRNA. The active-site Proton acceptor is histidine 22. 3 residues coordinate tRNA: phenylalanine 68, asparagine 70, and asparagine 116.

It belongs to the PTH family. Monomer.

Its subcellular location is the cytoplasm. The catalysed reaction is an N-acyl-L-alpha-aminoacyl-tRNA + H2O = an N-acyl-L-amino acid + a tRNA + H(+). Functionally, hydrolyzes ribosome-free peptidyl-tRNAs (with 1 or more amino acids incorporated), which drop off the ribosome during protein synthesis, or as a result of ribosome stalling. Its function is as follows. Catalyzes the release of premature peptidyl moieties from peptidyl-tRNA molecules trapped in stalled 50S ribosomal subunits, and thus maintains levels of free tRNAs and 50S ribosomes. The polypeptide is Peptidyl-tRNA hydrolase (Pasteurella multocida (strain Pm70)).